A 273-amino-acid polypeptide reads, in one-letter code: Diphthine methyl ester synthase (273 aa).

S-adenosyl-L-methionine contacts are provided by residues leucine 10, aspartate 87, glycine 90, 115–116, leucine 166, valine 224, and histidine 249; that span reads SI.

It belongs to the diphthine synthase family.

The catalysed reaction is 2-[(3S)-amino-3-carboxypropyl]-L-histidyl-[translation elongation factor 2] + 4 S-adenosyl-L-methionine = diphthine methyl ester-[translation elongation factor 2] + 4 S-adenosyl-L-homocysteine + 3 H(+). It participates in protein modification; peptidyl-diphthamide biosynthesis. Functionally, S-adenosyl-L-methionine-dependent methyltransferase that catalyzes four methylations of the modified target histidine residue in translation elongation factor 2 (EF-2), to form an intermediate called diphthine methyl ester. The four successive methylation reactions represent the second step of diphthamide biosynthesis. The polypeptide is Diphthine methyl ester synthase (dph5) (Dictyostelium discoideum (Social amoeba)).